Consider the following 124-residue polypeptide: Small ribosomal subunit protein uS13 (124 aa).

The segment covering 92–117 has biased composition (basic residues); sequence RRGLPVRGQRTKSNARTRKGPRKTVA. A disordered region spans residues 92–124; it reads RRGLPVRGQRTKSNARTRKGPRKTVANKKIESK.

Belongs to the universal ribosomal protein uS13 family. Part of the 30S ribosomal subunit. Forms a loose heterodimer with protein S19. Forms two bridges to the 50S subunit in the 70S ribosome.

In terms of biological role, located at the top of the head of the 30S subunit, it contacts several helices of the 16S rRNA. In the 70S ribosome it contacts the 23S rRNA (bridge B1a) and protein L5 of the 50S subunit (bridge B1b), connecting the 2 subunits; these bridges are implicated in subunit movement. Contacts the tRNAs in the A and P-sites. This chain is Small ribosomal subunit protein uS13, found in Mycoplasmoides gallisepticum (strain R(low / passage 15 / clone 2)) (Mycoplasma gallisepticum).